The sequence spans 394 residues: Carbamoyltransferase HypF homolog (394 aa).

Belongs to the carbamoyltransferase HypF family.

The sequence is that of Carbamoyltransferase HypF homolog (hypF1) from Cupriavidus necator (strain ATCC 17699 / DSM 428 / KCTC 22496 / NCIMB 10442 / H16 / Stanier 337) (Ralstonia eutropha).